An 847-amino-acid chain; its full sequence is DNA gyrase subunit A (847 aa).

The Topo IIA-type catalytic domain maps to 34–533 (LPDVRDGLKP…NYSDINTSDL (500 aa)). The active-site O-(5'-phospho-DNA)-tyrosine intermediate is Tyr122. Positions 560–566 (QKRGGKG) match the GyrA-box motif.

Belongs to the type II topoisomerase GyrA/ParC subunit family. Heterotetramer, composed of two GyrA and two GyrB chains. In the heterotetramer, GyrA contains the active site tyrosine that forms a transient covalent intermediate with DNA, while GyrB binds cofactors and catalyzes ATP hydrolysis.

The protein localises to the cytoplasm. It carries out the reaction ATP-dependent breakage, passage and rejoining of double-stranded DNA.. In terms of biological role, a type II topoisomerase that negatively supercoils closed circular double-stranded (ds) DNA in an ATP-dependent manner to modulate DNA topology and maintain chromosomes in an underwound state. Negative supercoiling favors strand separation, and DNA replication, transcription, recombination and repair, all of which involve strand separation. Also able to catalyze the interconversion of other topological isomers of dsDNA rings, including catenanes and knotted rings. Type II topoisomerases break and join 2 DNA strands simultaneously in an ATP-dependent manner. The polypeptide is DNA gyrase subunit A (Buchnera aphidicola subsp. Baizongia pistaciae (strain Bp)).